A 450-amino-acid polypeptide reads, in one-letter code: L-lysine-epsilon aminotransferase (450 aa).

Gly127 and Ala128 together coordinate pyridoxal 5'-phosphate. 2-oxoglutarate contacts are provided by Arg168 and Gln274. Arg168 provides a ligand contact to L-lysine. Pyridoxal 5'-phosphate is bound at residue Gln274. An N6-(pyridoxal phosphate)lysine modification is found at Lys300. Arg423 contacts 2-oxoglutarate.

Belongs to the class-III pyridoxal-phosphate-dependent aminotransferase family. Requires pyridoxal 5'-phosphate as cofactor.

It catalyses the reaction L-lysine + 2-oxoglutarate = (S)-2-amino-6-oxohexanoate + L-glutamate. It functions in the pathway antibiotic biosynthesis; cephamycin C biosynthesis. Functionally, catalyzes the transfer of the terminal amino group of L-lysine to alpha-ketoglutarate to yield L-glutamate and 2-aminoadipate 6-semialdehyde ((S)-2-amino-6-oxohexanoate), which is spontaneously converted to the dehydrated form 1-piperideine 6-carboxylate. The sequence is that of L-lysine-epsilon aminotransferase from Amycolatopsis lactamdurans (Nocardia lactamdurans).